The chain runs to 359 residues: Cytochrome c oxidase subunit 2 (359 aa).

An N-terminal signal peptide occupies residues M1–G28. C29 carries the S-diacylglycerol cysteine lipid modification. 2 helical membrane passes run V64 to F84 and V107 to F127. The interval P168 to S203 is disordered. Basic and acidic residues predominate over residues D177–S192. Cu cation is bound by residues H244, C285, E287, C289, H293, and M296. The tract at residues Y335 to A359 is disordered.

Associates with subunits I, III and IV to form cytochrome c oxidase. The 4 subunit cytochrome c oxidase forms a supercomplex with the menaquinol-cytochrome c reductase complex (cytochrome bc1). The cofactor is binuclear copper center (CuA).

The protein resides in the cell membrane. The enzyme catalyses 4 Fe(II)-[cytochrome c] + O2 + 8 H(+)(in) = 4 Fe(III)-[cytochrome c] + 2 H2O + 4 H(+)(out). Subunits I and II form the functional core of the enzyme complex. Electrons originating in cytochrome c are transferred via heme a and Cu(A) to the binuclear center formed by heme a3 and Cu(B). This Corynebacterium glutamicum (strain ATCC 13032 / DSM 20300 / JCM 1318 / BCRC 11384 / CCUG 27702 / LMG 3730 / NBRC 12168 / NCIMB 10025 / NRRL B-2784 / 534) protein is Cytochrome c oxidase subunit 2 (ctaC).